Here is a 246-residue protein sequence, read N- to C-terminus: Probable transcriptional regulatory protein YebC (246 aa).

The tract at residues 1–20 is disordered; it reads MAGHSKWANTRHRKAAQDAK.

Belongs to the TACO1 family.

It localises to the cytoplasm. The polypeptide is Probable transcriptional regulatory protein YebC (Shigella boydii serotype 4 (strain Sb227)).